The primary structure comprises 160 residues: Triabin (160 aa).

The first 18 residues, 1 to 18 (MKTIIAVTIFGILTCAYA), serve as a signal peptide directing secretion. 3 disulfides stabilise this stretch: C24/C128, C57/C160, and C87/C102.

The protein belongs to the calycin superfamily. Triabin family. As to expression, expressed in salivary glands.

It localises to the secreted. Thrombin inhibitor. Forms a non-covalent complex with thrombin at a molar ratio of 1:1. Inhibits thrombin-induced platelet aggregation. Prolongs thrombin clotting time and activated partial thromboplastin time. It only minimally suppresses the amidolytic activity of thrombin. Inhibits thrombin-mediated fibrin formation in the host. Inhibits thrombin-induced endothelium-dependent relaxant and contractile responses in host blood vessels. Inhibits thrombin-induced mitogenesis in host vascular smooth muscle cells. The sequence is that of Triabin from Meccus pallidipennis (Triatomine bug).